The sequence spans 339 residues: tRNA N6-adenosine threonylcarbamoyltransferase (339 aa).

The Fe cation site is built by histidine 111 and histidine 115. Substrate contacts are provided by residues 139-143, aspartate 172, glycine 185, aspartate 189, and asparagine 280; that span reads LVSGG. Position 308 (aspartate 308) interacts with Fe cation.

It belongs to the KAE1 / TsaD family. The cofactor is Fe(2+).

The protein localises to the cytoplasm. The catalysed reaction is L-threonylcarbamoyladenylate + adenosine(37) in tRNA = N(6)-L-threonylcarbamoyladenosine(37) in tRNA + AMP + H(+). Functionally, required for the formation of a threonylcarbamoyl group on adenosine at position 37 (t(6)A37) in tRNAs that read codons beginning with adenine. Is involved in the transfer of the threonylcarbamoyl moiety of threonylcarbamoyl-AMP (TC-AMP) to the N6 group of A37, together with TsaE and TsaB. TsaD likely plays a direct catalytic role in this reaction. In Bacteroides fragilis (strain ATCC 25285 / DSM 2151 / CCUG 4856 / JCM 11019 / LMG 10263 / NCTC 9343 / Onslow / VPI 2553 / EN-2), this protein is tRNA N6-adenosine threonylcarbamoyltransferase.